The primary structure comprises 835 residues: Protein translocase subunit SecA (835 aa).

Residues glutamine 85, 103–107 (GEGKT), and aspartate 495 contribute to the ATP site. The disordered stretch occupies residues 806-835 (KVFLNNDSSDDESSKKRRTRKVRTSKKPWN). The segment covering 820-835 (KKRRTRKVRTSKKPWN) has biased composition (basic residues).

This sequence belongs to the SecA family. In terms of assembly, monomer and homodimer. Part of the essential Sec protein translocation apparatus which comprises SecA, SecYEG and auxiliary proteins SecDF. Other proteins may also be involved.

Its subcellular location is the cell membrane. It is found in the cytoplasm. The catalysed reaction is ATP + H2O + cellular proteinSide 1 = ADP + phosphate + cellular proteinSide 2.. Its function is as follows. Part of the Sec protein translocase complex. Interacts with the SecYEG preprotein conducting channel. Has a central role in coupling the hydrolysis of ATP to the transfer of proteins into and across the cell membrane, serving as an ATP-driven molecular motor driving the stepwise translocation of polypeptide chains across the membrane. This Onion yellows phytoplasma (strain OY-M) protein is Protein translocase subunit SecA.